The primary structure comprises 287 residues: MIPGHRGPWSAPLCRRLVPAGHSGMGLSPAASGEYGIRLFRVPWPSRPKQISRTASTESSDTQPTNDSASSQALVVQFLPKLPKQDRGLEQARSLRQGQKPEINLELIPSKKRTEMIPSSDSEIEGNLKNQAAESNQKPRPGDLIEIFRIGYEHWAIYVEDDCVVHLAPPSEFEAGSITSIFSNRAVVKYSRLQDVLHGCSWKINNKLDGTYLPLPVDKIIQRTKNMINKIVQYSLIEGNCEHFVNDLRYGVPRSQQVEHVLVEGAKAAGAVLSAVVDSIRPKPITA.

Disordered regions lie at residues 48-72 (PKQI…ASSQ) and 86-138 (DRGL…SNQK). Composition is skewed to polar residues over residues 49–72 (KQIS…ASSQ) and 128–138 (LKNQAAESNQK). Residues 144–257 (LIEIFRIGYE…LRYGVPRSQQ (114 aa)) form the LRAT domain. Catalysis depends on residues histidine 154 and histidine 166. The Acyl-thioester intermediate role is filled by cysteine 241.

It belongs to the H-rev107 family. Expressed in testis.

The protein localises to the cytoplasm. It is found in the cytosol. It catalyses the reaction a 1,2-diacyl-sn-glycero-3-phosphocholine + H2O = a 1-acyl-sn-glycero-3-phosphocholine + a fatty acid + H(+). The catalysed reaction is a 1,2-diacyl-sn-glycero-3-phosphocholine + H2O = a 2-acyl-sn-glycero-3-phosphocholine + a fatty acid + H(+). It carries out the reaction 1-hexadecanoyl-2-(5Z,8Z,11Z,14Z-eicosatetraenoyl)-sn-glycero-3-phosphocholine + 1,2-di-(9Z-octadecenoyl)-sn-glycero-3-phosphoethanolamine = N-(5Z,8Z,11Z,14Z-eicosatetraenoyl)-1,2-di-(9Z-octadecenoyl)-sn-glycero-3-phosphoethanolamine + 1-hexadecanoyl-sn-glycero-3-phosphocholine + H(+). The enzyme catalyses 1,2-di-(9Z-octadecenoyl)-sn-glycero-3-phosphoethanolamine + 1,2-dihexadecanoyl-sn-glycero-3-phosphocholine = N-hexadecanoyl-1,2-di-(9Z-octadecenoyl)-sn-glycero-3-phosphoethanolamine + 1-hexadecanoyl-sn-glycero-3-phosphocholine + H(+). It catalyses the reaction 1,2-di-(9Z-octadecenoyl)-sn-glycero-3-phosphoethanolamine + 1,2-dihexadecanoyl-sn-glycero-3-phosphocholine = N-hexadecanoyl-1,2-di-(9Z-octadecenoyl)-sn-glycero-3-phosphoethanolamine + 2-hexadecanoyl-sn-glycero-3-phosphocholine + H(+). The catalysed reaction is a 1,2-diacyl-sn-glycero-3-phosphoethanolamine + a 1,2-diacyl-sn-glycero-3-phosphocholine = an N-acyl-1,2-diacyl-sn-glycero-3-phosphoethanolamine + a 1-acyl-sn-glycero-3-phosphocholine + H(+). It carries out the reaction a 1,2-diacyl-sn-glycero-3-phosphoethanolamine + a 1,2-diacyl-sn-glycero-3-phosphocholine = an N-acyl-1,2-diacyl-sn-glycero-3-phosphoethanolamine + a 2-acyl-sn-glycero-3-phosphocholine + H(+). The enzyme catalyses 1-hexadecanoyl-2-(9Z-octadecenoyl)-sn-glycero-3-phosphocholine + 1,2-di-(9Z-octadecenoyl)-sn-glycero-3-phosphoethanolamine = N,1,2-tri-(9Z-octadecenoyl)-sn-glycero-3-phosphoethanolamine + 1-hexadecanoyl-sn-glycero-3-phosphocholine + H(+). Functionally, exhibits both phospholipase A1/2 and acyltransferase activities. Shows phospholipase A1 (PLA1) and A2 (PLA2) activity, catalyzing the calcium-independent release of fatty acids from the sn-1 or sn-2 position of glycerophospholipids. Shows N-acyltransferase activity, catalyzing the calcium-independent transfer of a fatty acyl group at the sn-1 position of phosphatidylcholine (PC) and other glycerophospholipids to the primary amine of phosphatidylethanolamine (PE), forming N-acylphosphatidylethanolamine (NAPE), which serves as precursor for N-acylethanolamines (NAEs). The polypeptide is Phospholipase A and acyltransferase 5 (Rattus norvegicus (Rat)).